Here is a 415-residue protein sequence, read N- to C-terminus: L-threonine dehydratase biosynthetic IlvA (415 aa).

Residue K53 is modified to N6-(pyridoxal phosphate)lysine. Pyridoxal 5'-phosphate contacts are provided by residues N80, 183–187, and S308; that span reads GGGGL. Positions 332-406 constitute an ACT-like domain; that stretch reads HYFIIQFPQR…KGFEYREINK (75 aa).

It belongs to the serine/threonine dehydratase family. As to quaternary structure, homotetramer. The cofactor is pyridoxal 5'-phosphate.

It catalyses the reaction L-threonine = 2-oxobutanoate + NH4(+). The protein operates within amino-acid biosynthesis; L-isoleucine biosynthesis; 2-oxobutanoate from L-threonine: step 1/1. Catalyzes the anaerobic formation of alpha-ketobutyrate and ammonia from threonine in a two-step reaction. The first step involved a dehydration of threonine and a production of enamine intermediates (aminocrotonate), which tautomerizes to its imine form (iminobutyrate). Both intermediates are unstable and short-lived. The second step is the nonenzymatic hydrolysis of the enamine/imine intermediates to form 2-ketobutyrate and free ammonia. In the low water environment of the cell, the second step is accelerated by RidA. This chain is L-threonine dehydratase biosynthetic IlvA (ilvA), found in Halalkalibacterium halodurans (strain ATCC BAA-125 / DSM 18197 / FERM 7344 / JCM 9153 / C-125) (Bacillus halodurans).